The sequence spans 493 residues: Cysteine--tRNA ligase (493 aa).

Cys-29 is a Zn(2+) binding site. Residues 31 to 41 (VTVYDLCHLGH) carry the 'HIGH' region motif. Residues 154–179 (KLSGRDPDDQQQGASGRTADGEESRK) are disordered. 3 residues coordinate Zn(2+): Cys-213, His-238, and Glu-242. Positions 270–274 (KMSKS) match the 'KMSKS' region motif. An ATP-binding site is contributed by Lys-273.

The protein belongs to the class-I aminoacyl-tRNA synthetase family. Monomer. Requires Zn(2+) as cofactor.

It is found in the cytoplasm. The catalysed reaction is tRNA(Cys) + L-cysteine + ATP = L-cysteinyl-tRNA(Cys) + AMP + diphosphate. This is Cysteine--tRNA ligase from Synechococcus sp. (strain CC9605).